The sequence spans 199 residues: Glycerol-3-phosphate acyltransferase (199 aa).

4 helical membrane-spanning segments follow: residues 2-22 (LEVLLVLLGYVLGSVPTGILV), 77-97 (PWVLAAVALAAVVGHCWPVFL), 113-133 (IALAPPVGLGMFALWWVVALA), and 139-159 (LAAMVVTVVSPFAFLLSGQPL).

Belongs to the PlsY family. In terms of assembly, probably interacts with PlsX.

The protein localises to the cell membrane. It catalyses the reaction an acyl phosphate + sn-glycerol 3-phosphate = a 1-acyl-sn-glycero-3-phosphate + phosphate. The protein operates within lipid metabolism; phospholipid metabolism. Its function is as follows. Catalyzes the transfer of an acyl group from acyl-phosphate (acyl-PO(4)) to glycerol-3-phosphate (G3P) to form lysophosphatidic acid (LPA). This enzyme utilizes acyl-phosphate as fatty acyl donor, but not acyl-CoA or acyl-ACP. In Rubrobacter xylanophilus (strain DSM 9941 / JCM 11954 / NBRC 16129 / PRD-1), this protein is Glycerol-3-phosphate acyltransferase.